The chain runs to 467 residues: Cruzipain (467 aa).

The N-terminal stretch at 1–18 (MSGWARALLLAAVLVVMA) is a signal peptide. Residues 19 to 122 (CLVPAATASL…RVPVKVEVVG (104 aa)) constitute a propeptide, activation peptide. Cystine bridges form between C144–C185, C178–C223, and C277–C325. C147 is an active-site residue. N169 is a glycosylation site (N-linked (GlcNAc...) asparagine). Residue H284 is part of the active site. N292 carries an N-linked (GlcNAc...) asparagine glycan. Residue N304 is part of the active site. A disordered region spans residues 333–355 (SAVVGGPGPTPEPTTTTTTSAPG). A compositionally biased stretch (low complexity) spans 345-354 (PTTTTTTSAP). N-linked (GlcNAc...) asparagine glycosylation is present at N377.

This sequence belongs to the peptidase C1 family.

It catalyses the reaction Broad endopeptidase specificity similar to that of cathepsin L.. Strongly inhibited by E-64 (L-trans-epoxysuccinylleucylamido(4-guanidino)butane), Leupeptin, and N-alpha-p-tosyl-L-lysine chloromethyl ketone. Hydrolyzes chromogenic peptides at the carboxyl Arg or Lys; requires at least one more amino acid, preferably Arg, Phe, Val or Leu, between the terminal Arg or Lys and the amino-blocking group. In terms of biological role, the cysteine protease may play an important role in the development and differentiation of the parasites at several stages of their life cycle. The polypeptide is Cruzipain (Trypanosoma cruzi).